The chain runs to 114 residues: Large ribosomal subunit protein uL22 (114 aa).

This sequence belongs to the universal ribosomal protein uL22 family. Part of the 50S ribosomal subunit.

This protein binds specifically to 23S rRNA; its binding is stimulated by other ribosomal proteins, e.g. L4, L17, and L20. It is important during the early stages of 50S assembly. It makes multiple contacts with different domains of the 23S rRNA in the assembled 50S subunit and ribosome. Its function is as follows. The globular domain of the protein is located near the polypeptide exit tunnel on the outside of the subunit, while an extended beta-hairpin is found that lines the wall of the exit tunnel in the center of the 70S ribosome. This chain is Large ribosomal subunit protein uL22, found in Myxococcus xanthus (strain DK1622).